A 563-amino-acid polypeptide reads, in one-letter code: Dihydroxy-acid dehydratase (563 aa).

Cysteine 51 contacts [2Fe-2S] cluster. Position 83 (aspartate 83) interacts with Mg(2+). Cysteine 124 contributes to the [2Fe-2S] cluster binding site. The Mg(2+) site is built by aspartate 125 and lysine 126. The residue at position 126 (lysine 126) is an N6-carboxylysine. Cysteine 196 provides a ligand contact to [2Fe-2S] cluster. Glutamate 448 provides a ligand contact to Mg(2+). The active-site Proton acceptor is serine 474.

This sequence belongs to the IlvD/Edd family. Homodimer. [2Fe-2S] cluster serves as cofactor. Mg(2+) is required as a cofactor.

The catalysed reaction is (2R)-2,3-dihydroxy-3-methylbutanoate = 3-methyl-2-oxobutanoate + H2O. It catalyses the reaction (2R,3R)-2,3-dihydroxy-3-methylpentanoate = (S)-3-methyl-2-oxopentanoate + H2O. It participates in amino-acid biosynthesis; L-isoleucine biosynthesis; L-isoleucine from 2-oxobutanoate: step 3/4. The protein operates within amino-acid biosynthesis; L-valine biosynthesis; L-valine from pyruvate: step 3/4. Functionally, functions in the biosynthesis of branched-chain amino acids. Catalyzes the dehydration of (2R,3R)-2,3-dihydroxy-3-methylpentanoate (2,3-dihydroxy-3-methylvalerate) into 2-oxo-3-methylpentanoate (2-oxo-3-methylvalerate) and of (2R)-2,3-dihydroxy-3-methylbutanoate (2,3-dihydroxyisovalerate) into 2-oxo-3-methylbutanoate (2-oxoisovalerate), the penultimate precursor to L-isoleucine and L-valine, respectively. In Polynucleobacter necessarius subsp. necessarius (strain STIR1), this protein is Dihydroxy-acid dehydratase.